Here is a 232-residue protein sequence, read N- to C-terminus: Urease accessory protein UreF (232 aa).

It belongs to the UreF family. As to quaternary structure, ureD, UreF and UreG form a complex that acts as a GTP-hydrolysis-dependent molecular chaperone, activating the urease apoprotein by helping to assemble the nickel containing metallocenter of UreC. The UreE protein probably delivers the nickel.

The protein localises to the cytoplasm. In terms of biological role, required for maturation of urease via the functional incorporation of the urease nickel metallocenter. The protein is Urease accessory protein UreF of Azorhizobium caulinodans (strain ATCC 43989 / DSM 5975 / JCM 20966 / LMG 6465 / NBRC 14845 / NCIMB 13405 / ORS 571).